Consider the following 380-residue polypeptide: Queuine tRNA-ribosyltransferase (380 aa).

The active-site Proton acceptor is the Asp95. Substrate contacts are provided by residues 95 to 99 (DSGGF), Asp149, Gln192, and Gly219. The segment at 250–256 (GVGSPDS) is RNA binding. Asp269 serves as the catalytic Nucleophile. Residues 274 to 278 (TRIGR) are RNA binding; important for wobble base 34 recognition. 4 residues coordinate Zn(2+): Cys307, Cys309, Cys312, and His338.

This sequence belongs to the queuine tRNA-ribosyltransferase family. As to quaternary structure, homodimer. Within each dimer, one monomer is responsible for RNA recognition and catalysis, while the other monomer binds to the replacement base PreQ1. It depends on Zn(2+) as a cofactor.

It carries out the reaction 7-aminomethyl-7-carbaguanine + guanosine(34) in tRNA = 7-aminomethyl-7-carbaguanosine(34) in tRNA + guanine. It functions in the pathway tRNA modification; tRNA-queuosine biosynthesis. Functionally, catalyzes the base-exchange of a guanine (G) residue with the queuine precursor 7-aminomethyl-7-deazaguanine (PreQ1) at position 34 (anticodon wobble position) in tRNAs with GU(N) anticodons (tRNA-Asp, -Asn, -His and -Tyr). Catalysis occurs through a double-displacement mechanism. The nucleophile active site attacks the C1' of nucleotide 34 to detach the guanine base from the RNA, forming a covalent enzyme-RNA intermediate. The proton acceptor active site deprotonates the incoming PreQ1, allowing a nucleophilic attack on the C1' of the ribose to form the product. After dissociation, two additional enzymatic reactions on the tRNA convert PreQ1 to queuine (Q), resulting in the hypermodified nucleoside queuosine (7-(((4,5-cis-dihydroxy-2-cyclopenten-1-yl)amino)methyl)-7-deazaguanosine). The polypeptide is Queuine tRNA-ribosyltransferase (Geobacillus thermodenitrificans (strain NG80-2)).